The chain runs to 349 residues: MTRAKRKKEHIDHALSTGQKRQTGLDDITFVHVSLPETELSQVDTSTKIGELFLSSPIFINAMTGGGGKATFEINRALARAAAQTGIPVAVGSQMSALKDPDERPSYEIVRKENMKGLVFANLGSEATVEQAKRAVDMIEADMLQIHLNVIQEIVMPEGDRNFTGRLRRIEDICRSVSVPVAVKEVGFGMSRDTAARLFNVGVQAIDVGGFGGTNFSKIENLRRDKAVEFFDQWGISTAASLAEVSSISGDRPIIASGGIQDALDLAKSIALGASAAGMAGYFLKVLTASGEEALAAEIESLIEDFKRIMTVLGCRTIEQLKKAPLVIKGDTYHWLKARGVDPFVYSMR.

Residue 6–7 (RK) participates in substrate binding. Residues 62 to 64 (AMT), S93, and N122 each bind FMN. Q152 provides a ligand contact to substrate. E153 contacts Mg(2+). FMN contacts are provided by residues K184, T214, 258–259 (GG), and 280–281 (AG).

The protein belongs to the IPP isomerase type 2 family. In terms of assembly, homooctamer. Dimer of tetramers. It depends on FMN as a cofactor. The cofactor is NADPH. Mg(2+) is required as a cofactor.

The protein localises to the cytoplasm. It catalyses the reaction isopentenyl diphosphate = dimethylallyl diphosphate. In terms of biological role, involved in the biosynthesis of isoprenoids. Catalyzes the 1,3-allylic rearrangement of the homoallylic substrate isopentenyl (IPP) to its allylic isomer, dimethylallyl diphosphate (DMAPP). This is Isopentenyl-diphosphate delta-isomerase from Bacillus licheniformis (strain ATCC 14580 / DSM 13 / JCM 2505 / CCUG 7422 / NBRC 12200 / NCIMB 9375 / NCTC 10341 / NRRL NRS-1264 / Gibson 46).